Here is a 327-residue protein sequence, read N- to C-terminus: o-succinylbenzoate synthase (327 aa).

The Proton donor role is filled by lysine 110. Mg(2+)-binding residues include aspartate 138, glutamate 165, and aspartate 188. The active-site Proton acceptor is the lysine 212.

Belongs to the mandelate racemase/muconate lactonizing enzyme family. MenC type 1 subfamily. A divalent metal cation serves as cofactor.

The catalysed reaction is (1R,6R)-6-hydroxy-2-succinyl-cyclohexa-2,4-diene-1-carboxylate = 2-succinylbenzoate + H2O. It participates in quinol/quinone metabolism; 1,4-dihydroxy-2-naphthoate biosynthesis; 1,4-dihydroxy-2-naphthoate from chorismate: step 4/7. It functions in the pathway quinol/quinone metabolism; menaquinone biosynthesis. Converts 2-succinyl-6-hydroxy-2,4-cyclohexadiene-1-carboxylate (SHCHC) to 2-succinylbenzoate (OSB). This chain is o-succinylbenzoate synthase, found in Mycobacterium ulcerans (strain Agy99).